The primary structure comprises 206 residues: Ribosomal RNA large subunit methyltransferase E (206 aa).

S-adenosyl-L-methionine-binding residues include G61, W63, D81, D97, and D122. K162 serves as the catalytic Proton acceptor.

Belongs to the class I-like SAM-binding methyltransferase superfamily. RNA methyltransferase RlmE family.

It is found in the cytoplasm. The enzyme catalyses uridine(2552) in 23S rRNA + S-adenosyl-L-methionine = 2'-O-methyluridine(2552) in 23S rRNA + S-adenosyl-L-homocysteine + H(+). In terms of biological role, specifically methylates the uridine in position 2552 of 23S rRNA at the 2'-O position of the ribose in the fully assembled 50S ribosomal subunit. The sequence is that of Ribosomal RNA large subunit methyltransferase E from Neisseria meningitidis serogroup C (strain 053442).